A 93-amino-acid chain; its full sequence is Pyrimidine/purine nucleoside phosphorylase (93 aa).

The protein belongs to the nucleoside phosphorylase PpnP family.

The catalysed reaction is a purine D-ribonucleoside + phosphate = a purine nucleobase + alpha-D-ribose 1-phosphate. It catalyses the reaction adenosine + phosphate = alpha-D-ribose 1-phosphate + adenine. The enzyme catalyses cytidine + phosphate = cytosine + alpha-D-ribose 1-phosphate. It carries out the reaction guanosine + phosphate = alpha-D-ribose 1-phosphate + guanine. The catalysed reaction is inosine + phosphate = alpha-D-ribose 1-phosphate + hypoxanthine. It catalyses the reaction thymidine + phosphate = 2-deoxy-alpha-D-ribose 1-phosphate + thymine. The enzyme catalyses uridine + phosphate = alpha-D-ribose 1-phosphate + uracil. It carries out the reaction xanthosine + phosphate = alpha-D-ribose 1-phosphate + xanthine. Functionally, catalyzes the phosphorolysis of diverse nucleosides, yielding D-ribose 1-phosphate and the respective free bases. Can use uridine, adenosine, guanosine, cytidine, thymidine, inosine and xanthosine as substrates. Also catalyzes the reverse reactions. In Marinobacter nauticus (strain ATCC 700491 / DSM 11845 / VT8) (Marinobacter aquaeolei), this protein is Pyrimidine/purine nucleoside phosphorylase.